We begin with the raw amino-acid sequence, 818 residues long: Protein TOC75-3, chloroplastic (818 aa).

A chloroplast-targeting transit peptide spans 1-79 (MAAFSVNGQL…LKNLAKPLAV (79 aa)). Residues 15-41 (TSSTASTSLSSRRKFLSPSSSRLPRIS) show a composition bias toward low complexity. The disordered stretch occupies residues 15–67 (TSSTASTSLSSRRKFLSPSSSRLPRISTQSPRVPSIKCSKSLPNRDTETSSKD). Basic and acidic residues predominate over residues 57–67 (PNRDTETSSKD). The transit peptide at 80–140 (ASVSSAASFF…KLFSPSPAVA (61 aa)) directs the protein to the chloroplast; outer membrane. 3 POTRA domains span residues 141-246 (DEEQ…FAES), 247-364 (TWQS…VVEG), and 365-448 (DITQ…LKEL). The Chloroplast intermembrane portion of the chain corresponds to 141-473 (DEEQSPDWDS…GRGGAPTLAS (333 aa)). A beta stranded membrane pass occupies residues 474-482 (FQPGGSVTF). Residues 483–509 (EHRNLQGLNRSLMGSVTTSNFLNPQDD) are Cytoplasmic-facing. A beta stranded membrane pass occupies residues 510–518 (LSFKLEYVH). At 519–562 (PYLDGVYNPRNRTFKTSCFNSRKLSPVFTGGPGVEEVPPIWVDR) the chain is on the chloroplast intermembrane side. The beta stranded transmembrane segment at 563–570 (AGVKANIT) threads the bilayer. Residues 571–578 (ENFTRQSK) lie on the Cytoplasmic side of the membrane. Residues 579-586 (FTYGLVME) form a beta stranded membrane-spanning segment. The Chloroplast intermembrane segment spans residues 587-693 (EITTRDESSH…VEQGAGKSPP (107 aa)). Residues 694–702 (PVLVLHGHY) form a beta stranded membrane-spanning segment. Topologically, residues 703-714 (GGCVGDLPSYDA) are cytoplasmic. A beta stranded membrane pass occupies residues 715–723 (FVLGGPYSV). Residues 724 to 785 (RGYNMGELGA…VYRRTGQGSS (62 aa)) are Chloroplast intermembrane-facing. Residues 786 to 792 (YGAGVKL) traverse the membrane as a beta stranded segment. The Cytoplasmic segment spans residues 793–806 (GLVRAEYAVDHNNG). Residues 807–814 (TGALFFRF) form a beta stranded membrane-spanning segment. The Chloroplast intermembrane segment spans residues 815-818 (GERY).

It belongs to the TOC75 family. As to quaternary structure, part of the TOC core complex that includes a protein for the specific recognition of transit peptides surrounded by a ring composed of four proteins forming translocation channels, and four to five GTP-binding proteins providing energy. This core complex can interact with components of the TIC complex to form a larger import complex. Chloroplastic protein precursors such as prSS (precursor of the RuBisCO small subunit) also interact with these complexes. The TOC complex contains a specific subset of polar lipids such as digalactosyldiacylglyceride (DGDG), phosphatidylcholine (PC) and phosphatidylglycerol (PG). TOC75-3 interacts with TOC34/OEP34, TOC159/TOC86, TOC132 and TOC120. Interacts with SP1. Interacts with TIC236. In terms of tissue distribution, mostly expressed in young and actively dividing photosynthetic tissues and, to a lower extent, in old leaves and roots. Particularly low levels in leaves after etiolation.

The protein localises to the plastid. It is found in the chloroplast outer membrane. Its function is as follows. Essential protein. Mediates the insertion of proteins targeted to the outer membrane of chloroplasts. Required for the import of protein precursors into chloroplasts. Forms the voltage-dependent preprotein translocation channels (hydrophilic beta barrel) of the TOC complex in the chloroplastic outer membrane. The polypeptide is Protein TOC75-3, chloroplastic (Arabidopsis thaliana (Mouse-ear cress)).